We begin with the raw amino-acid sequence, 752 residues long: Multifunctional tryptophan biosynthesis protein (752 aa).

A Glutamine amidotransferase type-1 domain is found at 3 to 202; it reads FTLLIDNYDS…IQMKGGKWGG (200 aa). Position 58-60 (58-60) interacts with L-glutamine; sequence GPG. Cys-86 acts as the Nucleophile; for GATase activity in catalysis. 136 to 137 lines the L-glutamine pocket; that stretch reads SL. Active-site for GATase activity residues include His-176 and Glu-178. Positions 231-495 are indole-3-glycerol phosphate synthase; the sequence is ILNRIHAQRL…DTKAFLRSLI (265 aa). Positions 509 to 752 are N-(5'-phosphoribosyl)anthranilate isomerase; it reads LVKICGIRST…VEAFVKAVRG (244 aa).

It catalyses the reaction N-(5-phospho-beta-D-ribosyl)anthranilate = 1-(2-carboxyphenylamino)-1-deoxy-D-ribulose 5-phosphate. The enzyme catalyses 1-(2-carboxyphenylamino)-1-deoxy-D-ribulose 5-phosphate + H(+) = (1S,2R)-1-C-(indol-3-yl)glycerol 3-phosphate + CO2 + H2O. It carries out the reaction chorismate + L-glutamine = anthranilate + pyruvate + L-glutamate + H(+). The protein operates within amino-acid biosynthesis; L-tryptophan biosynthesis; L-tryptophan from chorismate: step 1/5. Its pathway is amino-acid biosynthesis; L-tryptophan biosynthesis; L-tryptophan from chorismate: step 3/5. It participates in amino-acid biosynthesis; L-tryptophan biosynthesis; L-tryptophan from chorismate: step 4/5. In terms of biological role, trifunctional enzyme bearing the Gln amidotransferase (GATase) domain of anthranilate synthase, indole-glycerolphosphate synthase, and phosphoribosylanthranilate isomerase activities. The chain is Multifunctional tryptophan biosynthesis protein (TRP1) from Cryptococcus neoformans var. neoformans serotype D (strain JEC21 / ATCC MYA-565) (Filobasidiella neoformans).